A 464-amino-acid polypeptide reads, in one-letter code: 3-isopropylmalate dehydratase large subunit (464 aa).

[4Fe-4S] cluster is bound by residues Cys-337, Cys-397, and Cys-400.

It belongs to the aconitase/IPM isomerase family. LeuC type 1 subfamily. In terms of assembly, heterodimer of LeuC and LeuD. [4Fe-4S] cluster serves as cofactor.

The catalysed reaction is (2R,3S)-3-isopropylmalate = (2S)-2-isopropylmalate. The protein operates within amino-acid biosynthesis; L-leucine biosynthesis; L-leucine from 3-methyl-2-oxobutanoate: step 2/4. In terms of biological role, catalyzes the isomerization between 2-isopropylmalate and 3-isopropylmalate, via the formation of 2-isopropylmaleate. In Bacillus cereus (strain B4264), this protein is 3-isopropylmalate dehydratase large subunit.